Reading from the N-terminus, the 437-residue chain is GTPase Era, mitochondrial (437 aa).

Residues 1-43 (MAAPSWRGARLVQSVLRVWQVGPHVARERVIPFSSLLGFQRRC) constitute a mitochondrion transit peptide. One can recognise an Era-type G domain in the interval 112–330 (RVLRVVLLGA…QYLLTQAQPG (219 aa)). Positions 120–127 (GAPNAGKS) are G1. Residue 120–127 (GAPNAGKS) participates in GTP binding. A G2 region spans residues 146 to 150 (HTTRC). Residues 167 to 170 (DTPG) are G3. Residue 167 to 171 (DTPGI) coordinates GTP. At Ser173 the chain carries Phosphoserine. 236–239 (NKVD) contributes to the GTP binding site. Residues 236-239 (NKVD) are G4. The segment at 271 to 290 (HSHPGTHCPSPAVKDPNTQS) is disordered. Residues 308 to 310 (LSA) are G5. A KH type-2 domain is found at 360-437 (LPQEVPYNVQ…DIRLSVKLLK (78 aa)).

The protein belongs to the TRAFAC class TrmE-Era-EngA-EngB-Septin-like GTPase superfamily. Era GTPase family.

The protein localises to the mitochondrion matrix. The protein resides in the mitochondrion inner membrane. Functionally, probable GTPase that plays a role in the mitochondrial ribosomal small subunit assembly. Specifically binds the 12S mitochondrial rRNA (12S mt-rRNA) to a 33 nucleotide section delineating the 3' terminal stem-loop region. May act as a chaperone that protects the 12S mt-rRNA on the 28S mitoribosomal subunit during ribosomal small subunit assembly. This is GTPase Era, mitochondrial (ERAL1) from Homo sapiens (Human).